The following is a 328-amino-acid chain: MDLNTILIIVGIVALVALIVHGLWSNRREKSKYFDKANKFDRTSLTSRSHTQEEMVQPNNISPNTYVENGHTPISQPTTEKLPSEAELIDYRQSDKSVDDIKISIPNTQPIYDMGNHRSEPIQPTQPQYDMPTANNVASMTLEQLEAQSQNVGFNGINSSSPELRVQLAELSHEEHQVDYNLSFNEPKAETTAQPKQTTGYIQLYLIPKSSEEFNGAKLVQALENLGFILGKDEMYHRHLDLSVASPVLFSVANLEQPGTFNAYNLAEFNTIGIVLFMQLPSPGNNLANLRMMMRAAHTLAEDLQGVILTEEQEIFDANAEQAYLARV.

The Periplasmic segment spans residues 1 to 4 (MDLN). The helical transmembrane segment at 5–25 (TILIIVGIVALVALIVHGLWS) threads the bilayer. Over 26 to 328 (NRREKSKYFD…NAEQAYLARV (303 aa)) the chain is Cytoplasmic. The tract at residues 44–82 (SLTSRSHTQEEMVQPNNISPNTYVENGHTPISQPTTEKL) is disordered. The segment covering 57 to 81 (QPNNISPNTYVENGHTPISQPTTEK) has biased composition (polar residues).

Belongs to the ZipA family. Interacts with FtsZ via their C-terminal domains.

The protein resides in the cell inner membrane. In terms of biological role, essential cell division protein that stabilizes the FtsZ protofilaments by cross-linking them and that serves as a cytoplasmic membrane anchor for the Z ring. Also required for the recruitment to the septal ring of downstream cell division proteins. The polypeptide is Cell division protein ZipA (Haemophilus influenzae (strain PittGG)).